A 1377-amino-acid chain; its full sequence is MDALNRNQIGPGCQTQTMVQKGPLDLIETGKGLKVQTDKPHLVSLGSGRLSTAITLLPLEEGRTVIGSAARDISLQGPGLAPEHCYIENLRGTLTLYPCGNACTIDGLPVRQPTRLTQGCMLCLGQSTFLRFNHPAEAKWMKSMIPAGGRAPGPPYSPVPAESESLVNGNHTPQTATRGPSACASHSSLVSSIEKDLQEIMDSLVLEEPGAAGKKPAATSPLSPMANGGRYLLSPPTSPGAMSVGSSYENTSPAFSPLSSPASSGSCASHSPSGQEPGPSVPPLVPARSSSYHLALQPPQSRPSGARSESPRLSRKGGHERPPSPGLRGLLTDSPAATVLAEARRATESPRLGGQLPVVAISLSEYPASGALSQPTSIPGSPKFQPPVPAPRNKIGTLQDRPPSPFREPPGSERVLTTSPSRQLVGRTFSDGLATRTLQPPESPRLGRRGLDSMRELPPLSPSLSRRALSPLPTRTTPDPKLNREVAESPRPRRWAAHGASPEDFSLTLGARGRRTRSPSPTLGESLAPHKGSFSGRLSPAYSLGSLTGASPCQSPCVQRKLSSGDLRVPVTRERKNSITEISDNEDDLLEYHRRQRQERLREQEMERLERQRLETILNLCAEYSRADGGPEAGELPSIGEATAALALAGRRPSRGLAGASGRSSEEPGVATQRLWESMERSDEENLKEECSSTESTQQEHEDAPSTKLQGEVLALEEERAQVLGHVEQLKVRVKELEQQLQESAREAEMERALLQGEREAERALLQKEQKAVDQLQEKLVALETGIQKERDKEAEALETETKLFEDLEFQQLERESRVEEERELAGQGLLRSKAELLRSIAKRKERLAILDSQAGQIRAQAVQESERLARDKNASLQLLQKEKEKLTVLERRYHSLTGGRPFPKTTSTLKEMEKLLLPAVDLEQWYQELMAGLGTGPAAASPHSSPPPLPAKASRQLQVYRSKMDGEATSPLPRTRSGPLPSSSGSSSSSSQLSVATLGRSPSPKSALLTQNGTGSLPRNLAATLQDIETKRQLALQQKGQQVIEEQRRRLAELKQKAAAEAQCQWDALHGAAPFPAGPSGFPPLMHHSILHHLPAGRERGEEGEHAYDTLSLESSDSMETSISTGGNSACSPDNMSSASGLDMGKIEEMEKMLKEAHAEKNRLMESREREMELRRQALEEERRRREQVERRLQSESARRQQLVEKEVKMREKQFSQARPLTRYLPIRKEDFDLKTHIESSGHGVDTCLHVVLSSKVCRGYLVKMGGKIKSWKKRWFVFDRLKRTLSYYVDKHETKLKGVIYFQAIEEVYYDHLRSAAKKRFFRFTMVTESPNPALTFCVKTHDRLYYMVAPSAEAMRIWMDVIVTGAEGYTQFMN.

Serine 51 carries the phosphoserine modification. An FHA domain is found at 64–125 (TVIGSAARDI…LTQGCMLCLG (62 aa)). Asymmetric dimethylarginine is present on arginine 131. The segment at 150-187 (RAPGPPYSPVPAESESLVNGNHTPQTATRGPSACASHS) is disordered. The segment covering 165–178 (SLVNGNHTPQTATR) has biased composition (polar residues). Residues serine 192, serine 220, and serine 223 each carry the phosphoserine modification. Disordered stretches follow at residues 211 to 334 (AAGK…LTDS) and 370 to 535 (GALS…GSFS). The span at 252 to 273 (SPAFSPLSSPASSGSCASHSPS) shows a compositional bias: low complexity. Polar residues predominate over residues 288–303 (RSSSYHLALQPPQSRP). Residues 309-322 (ESPRLSRKGGHERP) are compositionally biased toward basic and acidic residues. Serine 324, serine 334, serine 381, serine 404, serine 430, serine 443, serine 461, serine 470, serine 489, and serine 501 each carry phosphoserine. Positions 456–473 (ELPPLSPSLSRRALSPLP) are enriched in low complexity. Residues 481 to 491 (KLNREVAESPR) show a composition bias toward basic and acidic residues. Arginine 512 carries the post-translational modification Omega-N-methylarginine. Phosphoserine is present on residues serine 518 and serine 520. A Phosphothreonine modification is found at threonine 522. A phosphoserine mark is found at serine 533, serine 539, serine 551, serine 555, serine 563, serine 578, and serine 583. A compositionally biased stretch (low complexity) spans 653–663 (PSRGLAGASGR). Disordered regions lie at residues 653-707 (PSRG…APST), 936-1019 (TGPA…GSLP), and 1119-1138 (SMET…DNMS). Residues 677-691 (ESMERSDEENLKEEC) are compositionally biased toward basic and acidic residues. Serine 678 is subject to Phosphoserine. Residues 683 to 809 (DEENLKEECS…TETKLFEDLE (127 aa)) adopt a coiled-coil conformation. Phosphoserine is present on residues serine 971 and serine 1017. Positions 971 to 992 (SPLPRTRSGPLPSSSGSSSSSS) are enriched in low complexity. Over residues 1009 to 1018 (LLTQNGTGSL) the composition is skewed to polar residues. A coiled-coil region spans residues 1144 to 1208 (DMGKIEEMEK…ARRQQLVEKE (65 aa)). One can recognise a PH domain in the interval 1256–1370 (SKVCRGYLVK…WMDVIVTGAE (115 aa)).

This is Pleckstrin homology-like domain family B member 1 (PHLDB1) from Homo sapiens (Human).